Consider the following 262-residue polypeptide: WW domain-binding protein 2 (262 aa).

Positions 1-84 (MALNKNHSEG…YLMKDCEVKQ (84 aa)) constitute a GRAM domain. Phosphotyrosine is present on Tyr-192. Positions 196–200 (PPPPY) match the PPxY motif 1 motif. Over residues 197-206 (PPPYPGPMEP) the composition is skewed to pro residues. Positions 197–262 (PPPYPGPMEP…YYPPEDKKTQ (66 aa)) are disordered. Residues 219 to 231 (AAEAKAAEAAASA) show a composition bias toward low complexity. Tyr-232 is subject to Phosphotyrosine. Positions 246–255 (SQPPPPPYYP) are enriched in pro residues. A PPxY motif 2 motif is present at residues 249–253 (PPPPY).

As to quaternary structure, binds to the WW domain of YAP1, WWP1 and WWP2. Interacts with NEDD4. Interacts with ESR1 and UBE3A. Post-translationally, phosphorylated in repsonse to EGF as well as estrogen and progesterone hormones. Tyr-192 and Tyr-232 are phosphorylated by YES and SRC inducing nuclear translocation.

The protein resides in the cytoplasm. It is found in the nucleus. Its function is as follows. Acts as a transcriptional coactivator of estrogen and progesterone receptors (ESR1 and PGR) upon hormone activation. In presence of estrogen, binds to ESR1-responsive promoters. Synergizes with YAP1 to enhance PGR activity. Modulates expression of post-synaptic scaffolding proteins via regulation of ESR1, ESR2 and PGR. This Rattus norvegicus (Rat) protein is WW domain-binding protein 2 (Wbp2).